Reading from the N-terminus, the 117-residue chain is MDTETSPLLSHNLSTREGIKQSTQGLLAHTIARYPGTTAILLGILILLVIILIIVAIVYYNRSVDCKSSMPKPPPSYYVQQPEPHHHFPVFFRKRKNSTSLQSHIPSDEQLAELAHS.

The N-linked (GlcNAc...) asparagine; by host glycan is linked to Asn12. Residues 39-59 (AILLGILILLVIILIIVAIVY) traverse the membrane as a helical segment. Residues Asn61 and Asn97 are each glycosylated (N-linked (GlcNAc...) asparagine; by host).

This sequence belongs to the asfivirus minor capsid protein p17 family. In terms of assembly, interacts with the minor capsid protein M1249L and with the hexon capsid protein p72 capsomers; these interactions form a rigid zipper structure that stabilizes the capsomers. Interacts with host STING1.

It is found in the virion membrane. It localises to the host endoplasmic reticulum membrane. The protein localises to the host Golgi apparatus membrane. In terms of biological role, together with the penton and the other minor capsid proteins (M1249L, p49), forms a complicated network immediately below the outer capsid shell, stabilizing the whole capsid. Three copies of p17 encircle each p72 capsomer in the inner capsid shell, anchoring p72 capsomers on the inner membrane. Required for the assembly of the capsid and icosahedral morphogenesis. Additionally, inhibits the host cGAS-STING pathway through its interaction with STING1 and subsequent interference of the recruitment of downstream components TBK1 and IKBKE. The chain is Minor capsid protein p17 from African swine fever virus (strain Badajoz 1971 Vero-adapted) (Ba71V).